Consider the following 366-residue polypeptide: MVEYTNTFKVAAVQAQPVWFDAAKTVDKTVSIIAEAARNGCELVAFPEVFIPGYPYHIWVDSPLAGMAKFAVRYHENSLTMDSPHVQRLLDAARDHNIAVVVGISERDGGSLYMTQLVIDADGQLVARRRKLKPTHVERSVYGEGNGSDISVYDMPFARLGALNCWEHFQTLTKYAMYSMHEQVHVASWPGMSLYQPEVPAFGVDAQLTATRMYALEGQTFVVCTTQVVTPEAHEFFCDNDEQRKLIGRGGGFARIIGPDGRDLATPLAEDEEGILYADIDLSAITLAKQAADPVGHYSRPDVLSLNFNQRHTTPVNTAISTIHATHTLVPQSGALDGVRELNGADEQRALPSTHSDETDRATASI.

The CN hydrolase domain maps to F8–L282. The active-site Proton acceptor is E48. Catalysis depends on K131, which acts as the Proton donor. The active-site Nucleophile is the C165. Residues D346–I366 form a disordered region. Positions H355–I366 are enriched in basic and acidic residues.

The protein belongs to the carbon-nitrogen hydrolase superfamily. Nitrilase family. Homodimer.

The catalysed reaction is an aliphatic nitrile + 2 H2O = a carboxylate + NH4(+). The protein is Aliphatic nitrilase (nitA) of Rhodococcus rhodochrous.